The following is a 968-amino-acid chain: RNA polymerase-associated protein RapA (968 aa).

One can recognise a Helicase ATP-binding domain in the interval 164–334 (DVGRRHAPRV…FARLRLLDPN (171 aa)). 177 to 184 (DEVGLGKT) contributes to the ATP binding site. A DEAH box motif is present at residues 280–283 (DEAH). One can recognise a Helicase C-terminal domain in the interval 490 to 662 (RVEWLMGYLT…YLASPDQTEG (173 aa)).

It belongs to the SNF2/RAD54 helicase family. RapA subfamily. In terms of assembly, interacts with the RNAP. Has a higher affinity for the core RNAP than for the holoenzyme. Its ATPase activity is stimulated by binding to RNAP.

Transcription regulator that activates transcription by stimulating RNA polymerase (RNAP) recycling in case of stress conditions such as supercoiled DNA or high salt concentrations. Probably acts by releasing the RNAP, when it is trapped or immobilized on tightly supercoiled DNA. Does not activate transcription on linear DNA. Probably not involved in DNA repair. This is RNA polymerase-associated protein RapA from Escherichia coli (strain 55989 / EAEC).